The primary structure comprises 211 residues: Small ribosomal subunit protein uS3 (211 aa).

In terms of domain architecture, KH type-2 spans 16–85 (IDEYFKTKLV…NPQIEVKQVE (70 aa)).

This sequence belongs to the universal ribosomal protein uS3 family. In terms of assembly, part of the 30S ribosomal subunit.

Its function is as follows. Binds the lower part of the 30S subunit head. In Methanococcus maripaludis (strain C7 / ATCC BAA-1331), this protein is Small ribosomal subunit protein uS3.